A 500-amino-acid chain; its full sequence is MSNMQQKTDVILIGAGIMSATLGSLLKELAPEWEIKVFEKLASAGEESSNEWNNAGTGHSALCELNYTSEKSDGSIDISKAVKVNEQFQLSRQFWAYLVKSKLIRNPQDFIMPLPHMSLVQGEKNVEFLKNRFEALSKNPLFQGMEFSDAPETLKKWLPLIMEGRTSNEPMAATKIDSGTDVNFGALTRMLFDYLKTKDVELNYKHSVENIKRTKNGLWEVKVHDMNSGKIEHHTAKFVFIGGGGGSLPLLQKTGIPESKHIGGFPVSGLFMVCKNQKVVEQHHAKVYGKAKVGAPPMSVPHLDTRYIDNKKALLFGPFAGFSPKFLKTGSNLDLIGSVKPNNVLTMLAAGVKEMGLTKYLIQQVMLSHEKRMEELREFIPNAKSEDWDIVVAGQRVQVIKDTDAGGKGTLQFGTEVVSAADGSIAALLGASPGASTAVHVMLEVLEKCFPSRMVEWEGKIKEMIPSYGISLTENPRLFQDLHTSTGRTLGLNEKETVHN.

This sequence belongs to the MQO family. Requires FAD as cofactor.

The enzyme catalyses (S)-malate + a quinone = a quinol + oxaloacetate. It functions in the pathway carbohydrate metabolism; tricarboxylic acid cycle; oxaloacetate from (S)-malate (quinone route): step 1/1. The polypeptide is Probable malate:quinone oxidoreductase (Bacillus anthracis (strain A0248)).